The following is a 480-amino-acid chain: MRVLNVASEAYPWIKTGGLADVAGALPAALAEHDVDMRTLLPAYAGLRQRPETRPVHHYADLFGGAASILEARLTGGLTLYLLDAPHLYDRPGGPYTDANGRDWADNAERFAAFCRAAADIALGILPDWTPDIVHAHDWQAGLVPAYLALSEASPRPPVLFTIHNLAFQGVVPRDRLAALLLPPDSFSVDGVEYYGQIGLLKAGLHYADALTTVSPSYAREIQTDTGGMGLGGLLRDRAAVLNGLLNGIDMTEWNPAHDPHVKAHFDRHSLEHRTINREALRTRFGLDSSAGPLFGIVSRLTGQKGIDLVLNALPFLISQQAQLVVLGSGDKGLEQGLLQAAQTHPRQIAVFSGYDEALSRQIFSGADAMLIPSRFEPCGLTQLYAMRYGAVPIVSRVGGLADTIIDANTAACEAGVATGLMFQPDGEDSLIEPLSRAIRLFHQAEIWERLQHRGMETDSSWTLRSTAYVALYTRLLSLR.

K15 lines the ADP-alpha-D-glucose pocket.

It belongs to the glycosyltransferase 1 family. Bacterial/plant glycogen synthase subfamily.

The catalysed reaction is [(1-&gt;4)-alpha-D-glucosyl](n) + ADP-alpha-D-glucose = [(1-&gt;4)-alpha-D-glucosyl](n+1) + ADP + H(+). It functions in the pathway glycan biosynthesis; glycogen biosynthesis. Its function is as follows. Synthesizes alpha-1,4-glucan chains using ADP-glucose. The polypeptide is Glycogen synthase (Granulibacter bethesdensis (strain ATCC BAA-1260 / CGDNIH1)).